A 268-amino-acid chain; its full sequence is MILPTNFFVTTIILLFILIFLASAIKIVKEYERAVIFRLGRVVGARGPGLFFIIPIFEKAVIVDLRTQVLDVPVQETITKDNVPVRVNAVVYFRVVDPVKAVTQVKNYIMATSQISQTTLRSVIGQAHLDELLSERDKLNMQLQRIIDEATDPWGIKVTAVEIKDVELPAGMQRAMAKQAEAERERRARITLAEAERQAAEKLREAAEIISEHPMALQLRTLQTISDVASDKSNVIVLMLPMEMLKLFKSLSDAAQVYAKKEKEKEKE.

Residues 1 to 21 (MILPTNFFVTTIILLFILIFL) form a helical membrane-spanning segment. Coiled coils occupy residues 125 to 152 (GQAH…EATD) and 178 to 213 (KQAE…ISEH).

Belongs to the band 7/mec-2 family. As to quaternary structure, homotrimer.

The protein localises to the membrane. The sequence is that of Stomatin homolog PYRAB06580 from Pyrococcus abyssi (strain GE5 / Orsay).